We begin with the raw amino-acid sequence, 301 residues long: Protoheme IX farnesyltransferase (301 aa).

A run of 9 helical transmembrane segments spans residues 20–42 (FTEL…GMWL), 55–75 (VDVI…SGAF), 105–125 (ALMV…MTTW), 126–146 (QAGV…SLYA), 150–172 (LVSN…WFAV), 176–198 (FSIV…FYAI), 227–247 (MFFW…LGIV), 249–269 (VVLA…GFKM), and 280–300 (FVYS…ISIF).

Belongs to the UbiA prenyltransferase family. Protoheme IX farnesyltransferase subfamily. In terms of assembly, interacts with CtaA.

The protein resides in the cell membrane. It carries out the reaction heme b + (2E,6E)-farnesyl diphosphate + H2O = Fe(II)-heme o + diphosphate. It functions in the pathway porphyrin-containing compound metabolism; heme O biosynthesis; heme O from protoheme: step 1/1. In terms of biological role, converts heme B (protoheme IX) to heme O by substitution of the vinyl group on carbon 2 of heme B porphyrin ring with a hydroxyethyl farnesyl side group. This is Protoheme IX farnesyltransferase from Listeria monocytogenes serotype 4b (strain CLIP80459).